Here is a 454-residue protein sequence, read N- to C-terminus: Transcription factor bHLH123 (454 aa).

Low complexity predominate over residues 101-113; the sequence is SNANANTTSSTSS. 4 disordered regions span residues 101 to 127, 185 to 228, 270 to 348, and 398 to 417; these read SNAN…HHQA, ATTT…QFGS, AAAG…KRKE, and GASL…VSEE. 2 stretches are compositionally biased toward polar residues: residues 185-195 and 207-228; these read ATTTTPNSSSG and SSDQ…QFGS. Residues 303-324 show a composition bias toward basic and acidic residues; the sequence is EQPKNISEIRDSSSNEVKRGGN. The bHLH domain occupies 334–383; that stretch reads KSEAASPSPAFKRKEKMGDRIAALQQLVSPFGKTDAASVLSEAIEYIKFL.

In terms of assembly, homodimer.

It localises to the nucleus. This Arabidopsis thaliana (Mouse-ear cress) protein is Transcription factor bHLH123 (BHLH123).